We begin with the raw amino-acid sequence, 868 residues long: Spindle and centriole-associated protein 1 (868 aa).

4 disordered regions span residues 129 to 154 (RTGF…DPGT), 172 to 201 (DDGG…HSNR), 229 to 250 (IAAQ…AEDQ), and 291 to 326 (KPLL…LASS). Polar residues-rich tracts occupy residues 190-200 (ELPNSLSPHSN) and 229-245 (IAAQ…SSEL). A Phosphothreonine modification is found at Thr-236. Phosphoserine is present on Ser-240. A compositionally biased stretch (low complexity) spans 315 to 326 (SSSTTSADLASS). A coiled-coil region spans residues 381–434 (RYLKESETQLRKEVETRQQLEQMLGDHRELIDALTAEILLLREENGAVQARLQQ). 2 disordered regions span residues 630 to 664 (PQFV…LGDG) and 702 to 722 (SSGG…NASE). Residues 634–649 (SLSQPPCSSPPSTQQS) are compositionally biased toward low complexity. Position 655 is a phosphoserine (Ser-655). The segment covering 706-715 (EHGDGLREPS) has biased composition (basic and acidic residues). Residues 736–764 (SSMEERIAELNRQSMEARSKLLQLIEQQK) are a coiled coil. Phosphoserine is present on residues Ser-772, Ser-773, Ser-776, and Ser-831. The segment at 805 to 868 (SSKCNTVSPV…GWFALSAHLP (64 aa)) is disordered. A compositionally biased stretch (low complexity) spans 812 to 831 (SPVSGVSSRRSSGAISNSCS).

In terms of assembly, interacts with CEP120.

It is found in the cytoplasm. It localises to the cytoskeleton. The protein resides in the microtubule organizing center. Its subcellular location is the centrosome. The protein localises to the centriole. It is found in the spindle. In terms of biological role, regulator required for centriole duplication, for proper bipolar spindle formation and chromosome congression in mitosis. The protein is Spindle and centriole-associated protein 1 (Spice1) of Rattus norvegicus (Rat).